The sequence spans 802 residues: Acetyl-CoA decarbonylase/synthase complex subunit alpha (802 aa).

[4Fe-4S] cluster contacts are provided by C69, C72, C73, C75, C80, and C90. H113 contacts CO. Residues H246, C274, and C319 each contribute to the [Ni-4Fe-4S] cluster site. 2 consecutive 4Fe-4S ferredoxin-type domains span residues 404 to 432 (EELK…ISEA) and 442 to 473 (SKFE…VIEK). Residues C413, C416, C419, C423, C451, C454, C457, and C461 each contribute to the [4Fe-4S] cluster site. 3 residues coordinate [Ni-4Fe-4S] cluster: C519, C548, and C583.

The protein belongs to the Ni-containing carbon monoxide dehydrogenase family. Heterotetramer of two alpha and two epsilon subunits. The ACDS complex is made up of alpha, epsilon, beta, gamma and delta subunits with a probable stoichiometry of (alpha(2)epsilon(2))(4)-beta(8)-(gamma(1)delta(1))(8). The cofactor is [4Fe-4S] cluster. [Ni-4Fe-4S] cluster is required as a cofactor.

It carries out the reaction CO + 2 oxidized [2Fe-2S]-[ferredoxin] + H2O = 2 reduced [2Fe-2S]-[ferredoxin] + CO2 + 2 H(+). It participates in one-carbon metabolism; methanogenesis from acetate. Its function is as follows. Part of the ACDS complex that catalyzes the reversible cleavage of acetyl-CoA, allowing growth on acetate as sole source of carbon and energy. The alpha-epsilon subcomponent functions as a carbon monoxide dehydrogenase. In Methanococcoides burtonii (strain DSM 6242 / NBRC 107633 / OCM 468 / ACE-M), this protein is Acetyl-CoA decarbonylase/synthase complex subunit alpha.